Reading from the N-terminus, the 294-residue chain is Aquaporin NIP1-2 (294 aa).

M1 carries the N-acetylmethionine modification. 2 helical membrane passes run 54–74 (LMAE…AVAV) and 82–102 (VTLP…VYSL). An NPA 1 motif is present at residues 111-113 (NPA). Helical transmembrane passes span 133–153 (VISQ…LFGL), 177–197 (SFVI…GVAT), and 201–221 (AIGE…VIIA). The NPA 2 signature appears at 230 to 232 (NPG). Residues 248–268 (WIYIVSPIVGAVSGAWVYNMV) traverse the membrane as a helical segment. Phosphoserine is present on S283.

Belongs to the MIP/aquaporin (TC 1.A.8) family. NIP (TC 1.A.8.12) subfamily. In terms of tissue distribution, expressed in developing seeds.

The protein localises to the membrane. In terms of biological role, water channel probably required to promote glycerol permeability and water transport across cell membranes. The polypeptide is Aquaporin NIP1-2 (NIP1-2) (Arabidopsis thaliana (Mouse-ear cress)).